The sequence spans 420 residues: Proteinase-activated receptor 1 (420 aa).

The N-terminal stretch at 1-20 (MMELRVLLLLLLLTLLGAMG) is a signal peptide. Residues 21–42 (SLCLANSDTQAKGAHSNNMTIK) constitute a propeptide, removed for receptor activation. Residue N38 is glycosylated (N-linked (GlcNAc...) asparagine). Topologically, residues 43–101 (TFRIFDDSESEFEEIPWDELDESGEGSGDQAPVSRSARKPIRRNITKEAEQYLSSQWLT) are extracellular. The tract at residues 61-80 (ELDESGEGSGDQAPVSRSAR) is disordered. N-linked (GlcNAc...) asparagine glycosylation is present at N86. The helical transmembrane segment at 102-127 (KFVPSLYTVVFIVGLPLNLLAIIIFL) threads the bilayer. At 128–136 (FKMKVRKPA) the chain is on the cytoplasmic side. A helical transmembrane segment spans residues 137-156 (VVYMLNLAIADVFFVSVLPF). Residues 157–175 (KIAYHLSGNDWLFGPGMCR) are Extracellular-facing. An intrachain disulfide couples C174 to C253. Residues 176–197 (IVTAIFYCNMYCSVLLIASISV) traverse the membrane as a helical segment. Over 198-217 (DRFLAVVYPMHSLSWRTMSR) the chain is Cytoplasmic. A helical membrane pass occupies residues 218-238 (AYMACSFIWLISIASTIPLLV). Residues 239-267 (TEQTQKIPRLDITTCHDVLDLKDLKDFYI) are Extracellular-facing. A helical transmembrane segment spans residues 268–287 (YYFSSFCLLFFFVPFIITTI). The Cytoplasmic portion of the chain corresponds to 288 to 310 (CYIGIIRSLSSSSIENSCKKTRA). The helical transmembrane segment at 311 to 333 (LFLAVVVLCVFIICFGPTNVLFL) threads the bilayer. The Extracellular segment spans residues 334-345 (THYLQEANEFLY). The chain crosses the membrane as a helical span at residues 346–369 (FAYILSACVGSVSCCLDPLIYYYA). Residues 370–420 (SSQCQRYLYSLLCCRKVSEPGSSTGQLMSTAMKNDNCSTNAKSSIYKKLLA) are Cytoplasmic-facing.

It belongs to the G-protein coupled receptor 1 family. Proteolytic cleavage generates a new N-terminus that functions as a tethered ligand.

Its subcellular location is the cell membrane. High affinity receptor that binds the activated thrombin, leading to calcium release from intracellular stores. The thrombin-activated receptor signaling pathway is mediated through PTX-insensitive G proteins, activation of phospholipase C resulting in the production of 1D-myo-inositol 1,4,5-trisphosphate (InsP3) which binds to InsP3 receptors causing calcium release from the stores. The polypeptide is Proteinase-activated receptor 1 (Xenopus laevis (African clawed frog)).